A 373-amino-acid polypeptide reads, in one-letter code: Flagellar P-ring protein 1 (373 aa).

The N-terminal stretch at 1 to 25 is a signal peptide; sequence MKPINTFFSSFLLALTLGLPATSQA.

Belongs to the FlgI family. As to quaternary structure, the basal body constitutes a major portion of the flagellar organelle and consists of four rings (L,P,S, and M) mounted on a central rod.

Its subcellular location is the periplasm. The protein localises to the bacterial flagellum basal body. In terms of biological role, assembles around the rod to form the L-ring and probably protects the motor/basal body from shearing forces during rotation. In Vibrio parahaemolyticus serotype O3:K6 (strain RIMD 2210633), this protein is Flagellar P-ring protein 1.